The following is a 570-amino-acid chain: NADPH oxidase 2 (570 aa).

Residues 2 to 9 are Cytoplasmic-facing; that stretch reads GNWAVNEG. A helical transmembrane segment spans residues 10-36; that stretch reads LSIFVILVWLGLNVFLFINYYKVYDDG. The Extracellular segment spans residues 37–46; it reads PKYNYTRKLL. N-linked (GlcNAc...) asparagine glycosylation is present at asparagine 40. Residues 47-72 traverse the membrane as a helical segment; that stretch reads GSALALARAPAACLNFNCMLILLPVC. The Ferric oxidoreductase domain occupies 54–286; that stretch reads RAPAACLNFN…MFLYLCERLV (233 aa). The Cytoplasmic portion of the chain corresponds to 73–95; it reads RNLLSFLRGSSACCSTRIRRQLD. The helical transmembrane segment at 96–130 threads the bilayer; sequence RNLTFHKMVAWMIALHTAIHTIAHLFNVEWCVNAR. Positions 101 and 115 each coordinate heme b. The Extracellular portion of the chain corresponds to 131 to 163; the sequence is VGISDRYSIALSDIGDNENEEYLNFAREKIKNP. Residues lysine 159 and lysine 161 each participate in a glycyl lysine isopeptide (Lys-Gly) (interchain with G-Cter in ubiquitin) cross-link. A helical membrane pass occupies residues 164-194; sequence EGGLYVAVTRLAGITGIVITLCLILIITSST. The Cytoplasmic segment spans residues 195–203; sequence KTIRRSYFE. Arginine 199 and serine 200 together coordinate FAD. A helical transmembrane segment spans residues 204–222; it reads VFWYTHHLFVIFFIGLAIH. Positions 206, 209, 222, 226, and 227 each coordinate heme b. At 223–267 the chain is on the extracellular side; the sequence is GAERIVRGQTAESLEEHNLDICADKIEEWGKIKECPVPKFAGNPP. A Glycyl lysine isopeptide (Lys-Gly) (interchain with G-Cter in ubiquitin) cross-link involves residue lysine 255. The heme b site is built by methionine 268, tyrosine 280, and arginine 287. Residues 268-285 form a helical membrane-spanning segment; that stretch reads MTWKWIVGPMFLYLCERL. Residues 286–570 lie on the Cytoplasmic side of the membrane; it reads VRFWRSQQKV…VHFIFNKENF (285 aa). Positions 287–397 constitute an FAD-binding FR-type domain; it reads RFWRSQQKVV…DGPFGTASED (111 aa). Residues lysine 294, lysine 299, lysine 306, lysine 328, and lysine 334 each participate in a glycyl lysine isopeptide (Lys-Gly) (interchain with G-Cter in ubiquitin) cross-link. Residues tryptophan 337, histidine 338, proline 339, threonine 341, histidine 354, arginine 356, tryptophan 361, and threonine 362 each coordinate FAD. Residue lysine 381 forms a Glycyl lysine isopeptide (Lys-Gly) (interchain with G-Cter in ubiquitin) linkage. The NADPH site is built by isoleucine 411, arginine 446, and threonine 481. Lysine 506 is covalently cross-linked (Glycyl lysine isopeptide (Lys-Gly) (interchain with G-Cter in ubiquitin)). Arginine 513 lines the NADPH pocket. Lysine 567 participates in a covalent cross-link: Glycyl lysine isopeptide (Lys-Gly) (interchain with G-Cter in ubiquitin).

In terms of assembly, component of the phagocyte NADPH oxidase core complex/cytochrome b558 complex, composed of CYBB (heavy chain (beta)) and CYBA (light chain (alpha)). Component of the phagocyte NADPH oxidase complex composed of an obligatory core heterodimer formed by the membrane proteins CYBA and CYBB and the cytosolic regulatory subunits NCF1/p47-phox, NCF2/p67-phox, NCF4/p40-phox and the small GTPase RAC1 or RAC2. Interacts with NCF1 (phosphorylated form). Interacts with NCF2; the interaction is enhanced in the presence of GBP7. Interacts with RAC2. Interacts with RAC1. Interacts with calprotectin (S100A8/9). Interacts with NRROS; the interaction is direct and impairs formation of a stable NADPH oxidase complex. Interacts with CYBC1; CYBC1 may act as a chaperone stabilizing Cytochrome b-245 heterodimer. The CYBA:CYBB complex interacts with GBP7. FAD is required as a cofactor. In terms of processing, glycosylated. Post-translationally, phosphorylated on Ser and Thr residues by PKC during neutrophils activation. Phosphorylation enhances the NADPH oxidase activity and stimulates its interaction with RAC2, NCF2/p67-phox, and NCF1/p47-phox. Undergoes 'Lys-48'-linked polyubiquitination, likely by RNF145, triggering endoplasmic reticulum-associated degradation.

It is found in the cell membrane. It carries out the reaction NADPH + 2 O2 = 2 superoxide + NADP(+) + H(+). Functionally, catalytic subunit of the phagocyte NADPH oxidase complex that mediates the transfer of electrons from cytosolic NADPH to O2 to produce the superoxide anion (O2(-)). In the activated complex, electrons are first transferred from NADPH to flavin adenine dinucleotide (FAD) and subsequently transferred via two heme molecules to molecular oxygen, producing superoxide through an outer-sphere reaction. Activation of the NADPH oxidase complex is initiated by the assembly of cytosolic subunits of the NADPH oxidase complex with the core NADPH oxidase complex to form a complex at the plasma membrane or phagosomal membrane. This activation process is initiated by phosphorylation dependent binding of the cytosolic NCF1/p47-phox subunit to the C-terminus of CYBA/p22-phox. NADPH oxidase complex assembly is impaired through interaction with NRROS. The sequence is that of NADPH oxidase 2 from Mus musculus (Mouse).